A 564-amino-acid polypeptide reads, in one-letter code: Kelch repeat and BTB domain-containing protein 1 (564 aa).

The BTB domain maps to 21 to 88; it reads CDINIVINDE…IYGIPLSLTN (68 aa). Residues 123–219 enclose the BACK domain; sequence CIDFYIYADK…SLLSPQVIKS (97 aa). 5 Kelch repeats span residues 252–297, 298–346, 347–395, 397–441, and 442–492; these read IELI…VLDN, IIYM…ADDE, YIYC…MLNG, IYVI…VHDG, and KIYI…STHN.

Interacts (via BTB domain) with host CUL3.

Its subcellular location is the host cytoplasm. In terms of biological role, probable substrate-specific adapter of CUL3-containing E3 ubiquitin-protein ligases which mediate the ubiquitination and subsequent proteasomal degradation of host target proteins. The polypeptide is Kelch repeat and BTB domain-containing protein 1 (KBTB1) (Bos taurus (Bovine)).